The chain runs to 2211 residues: Nonribosomal peptide synthetase 13 (2211 aa).

The segment at 76 to 475 (TYAELDSLSD…IEHHLQLTLP (400 aa)) is adenylation 1. The 78-residue stretch at 594-671 (PPSTPKEATI…EQSKRAGLIQ (78 aa)) folds into the Carrier 1 domain. An O-(pantetheine 4'-phosphoryl)serine modification is found at Ser-631. A condensation 1 region spans residues 710–975 (EDIYPCTALQ…IATVPTRIRV (266 aa)). The interval 1169–1563 (TYRELWAHSS…LGAVEASVMR (395 aa)) is adenylation 2. In terms of domain architecture, Carrier 2 spans 1677 to 1756 (PMSDDNERRL…RSRHLITEQA (80 aa)). Ser-1714 carries the post-translational modification O-(pantetheine 4'-phosphoryl)serine. Residues 1814-2069 (HFQFDLSGAV…CTNYIPYRLS (256 aa)) are condensation 2.

Belongs to the NRP synthetase family.

The catalysed reaction is L-proline + L-tryptophan + 2 ATP = brevianamide F + 2 AMP + 2 diphosphate + 2 H(+). It functions in the pathway mycotoxin biosynthesis. Nonribosomal peptide synthetase; part of the gene cluster that mediates the biosynthesis of fumitremorgins, indole alkaloids that carry not only intriguing chemical structures, but also interesting biological and pharmacological activities. The biosynthesis of fumitremorgin-type alkaloids begins by condensation of the two amino acids L-tryptophan and L-proline to brevianamide F, catalyzed by the non-ribosomal peptide synthetase ftmA. Brevianamide F is then prenylated by the prenyltransferase ftmPT1/ftmB in the presence of dimethylallyl diphosphate, resulting in the formation of tryprostatin B. The three cytochrome P450 monooxygenases, ftmP450-1/ftmC, ftmP450-2/ftmE and ftmP450-3/FtmG, are responsible for the conversion of tryprostatin B to 6-hydroxytryprostatin B, tryprostatin A to fumitremorgin C and fumitremorgin C to 12,13-dihydroxyfumitremorgin C, respectively. The putative methyltransferase ftmMT/ftmD is expected for the conversion of 6-hydroxytryprostatin B to tryprostatin A. FtmPT2/FtmH catalyzes the prenylation of 12,13-dihydroxyfumitre-morgin C in the presence of dimethylallyl diphosphate, resulting in the formation of fumitremorgin B. Fumitremorgin B is further converted to verruculogen by ftmOx1/ftmF via the insertion of an endoperoxide bond between the two prenyl moieties. In some fungal species, verruculogen is further converted to fumitremorgin A, but the enzymes involved in this step have not been identified yet. The protein is Nonribosomal peptide synthetase 13 of Aspergillus fumigatus (strain ATCC MYA-4609 / CBS 101355 / FGSC A1100 / Af293) (Neosartorya fumigata).